Reading from the N-terminus, the 393-residue chain is S-adenosylmethionine synthase 3 (393 aa).

Residue Glu-9 coordinates Mg(2+). Residue His-15 coordinates ATP. Residue Glu-43 participates in K(+) binding. Residues Glu-56 and Gln-99 each coordinate L-methionine. Residues 167–169 (DGK), 235–238 (SGRF), Asp-246, 252–253 (RK), Ala-269, Lys-273, and Lys-277 contribute to the ATP site. Asp-246 contributes to the L-methionine binding site. L-methionine is bound at residue Lys-277.

Belongs to the AdoMet synthase family. In terms of assembly, homotetramer. The cofactor is Mn(2+). Requires Mg(2+) as cofactor. It depends on Co(2+) as a cofactor. K(+) serves as cofactor.

It is found in the cytoplasm. The catalysed reaction is L-methionine + ATP + H2O = S-adenosyl-L-methionine + phosphate + diphosphate. It functions in the pathway amino-acid biosynthesis; S-adenosyl-L-methionine biosynthesis; S-adenosyl-L-methionine from L-methionine: step 1/1. Functionally, catalyzes the formation of S-adenosylmethionine from methionine and ATP. The reaction comprises two steps that are both catalyzed by the same enzyme: formation of S-adenosylmethionine (AdoMet) and triphosphate, and subsequent hydrolysis of the triphosphate. The sequence is that of S-adenosylmethionine synthase 3 (SAM3) from Petunia hybrida (Petunia).